Reading from the N-terminus, the 1161-residue chain is Nuclear receptor-interacting protein 1 (1161 aa).

The segment at 1 to 416 (MTHGEELGSD…FESSTPTTID (416 aa)) is interaction with ZNF366. The short motif at 21-25 (LEGLL) is the LXXLL motif 1 element. Positions 34-68 (GTAINKKSAGHKEEDQNFNLSGSAFPSCQSNGPTV) are disordered. Residues 50–68 (NFNLSGSAFPSCQSNGPTV) show a composition bias toward polar residues. The segment at 78 to 335 (MLHLKKARLL…LNGQARALPA (258 aa)) is repression domain 1. At Ser-104 the chain carries Phosphoserine. An N6-acetyllysine; alternate modification is found at Lys-111. A Glycyl lysine isopeptide (Lys-Gly) (interchain with G-Cter in SUMO2); alternate cross-link involves residue Lys-111. Positions 133 to 137 (LASLL) match the LXXLL motif 2 motif. The residue at position 158 (Lys-158) is an N6-acetyllysine. Residue Lys-170 forms a Glycyl lysine isopeptide (Lys-Gly) (interchain with G-Cter in SUMO2) linkage. The short motif at 185–189 (LKTLL) is the LXXLL motif 3 element. Residues Lys-195 and Lys-198 each participate in a glycyl lysine isopeptide (Lys-Gly) (interchain with G-Cter in SUMO2) cross-link. The residue at position 207 (Thr-207) is a Phosphothreonine. At Ser-218 the chain carries Phosphoserine. Positions 267 to 271 (LALLL) match the LXXLL motif 4 motif. N6-acetyllysine occurs at positions 287 and 311. Ser-358 is modified (phosphoserine). Residue Lys-374 forms a Glycyl lysine isopeptide (Lys-Gly) (interchain with G-Cter in SUMO2) linkage. Ser-380 is modified (phosphoserine). The LXXLL motif 5 motif lies at 382–386 (LLHLL). The interval 393-436 (TPMNGHSQNERASSFESSTPTTIDEYSDNNPSFTDDSSGDESSY) is disordered. The repression domain 2 stretch occupies residues 411–701 (TPTTIDEYSD…PAGPEPGLPG (291 aa)). Residues 432–473 (DESSYSNCVPIDLSCKHRIEKPEAERPVSLENLTQSLLNTWD) form a required for targeting to small nuclear foci region. The CTBP-binding; principal site signature appears at 441–447 (PIDLSCK). An N6-acetyllysine mark is found at Lys-447 and Lys-482. Ser-488 bears the Phosphoserine mark. The short motif at 501–505 (LLQLL) is the LXXLL motif 6 element. Residue Lys-509 forms a Glycyl lysine isopeptide (Lys-Gly) (interchain with G-Cter in SUMO2) linkage. Positions 517–552 (NASPQDIHSDGTKFSPQNYTRTSVIESPSTNRTTPV) are enriched in polar residues. The disordered stretch occupies residues 517-559 (NASPQDIHSDGTKFSPQNYTRTSVIESPSTNRTTPVSTPPLYT). A Phosphoserine modification is found at Ser-519. Lys-529 bears the N6-acetyllysine mark. Phosphoserine is present on residues Ser-531, Ser-543, and Ser-565. Positions 566–570 (PINLS) match the CTBP-binding motif. Disordered regions lie at residues 604 to 623 (TKGK…AQNS), 639 to 702 (GLQS…LPGC), and 717 to 747 (LLGN…ERAA). Lys-607 bears the N6-acetyllysine mark. Residue Ser-672 is modified to Phosphoserine. The LXXLL motif 7 signature appears at 714-718 (LQLLL). Positions 724-747 (GKNEKKEKTPARDEAPQEHSERAA) are enriched in basic and acidic residues. Positions 736–886 (DEAPQEHSER…TAVDTANHHS (151 aa)) are repression domain 3. Residues 754–1161 (VKIKSEPCDD…NALTIKKESE (408 aa)) form an interaction with ZNF366 region. Residues Lys-757 and Lys-803 each participate in a glycyl lysine isopeptide (Lys-Gly) (interchain with G-Cter in SUMO2) cross-link. Ser-808 carries the post-translational modification Phosphoserine. The LXXLL motif 8 signature appears at 820–824 (LSRLL). The tract at residues 829-848 (ESYPADEQDKSHRNSELPTL) is disordered. Glycyl lysine isopeptide (Lys-Gly) (interchain with G-Cter in SUMO2) cross-links involve residues Lys-851 and Lys-902. Position 932 is an N6-acetyllysine; alternate (Lys-932). Lys-932 participates in a covalent cross-link: Glycyl lysine isopeptide (Lys-Gly) (interchain with G-Cter in SUMO2); alternate. An LXXLL motif 9 motif is present at residues 937 to 941 (LKQLL). Positions 947–951 (VRDLS) match the CTBP-binding motif. A compositionally biased stretch (basic and acidic residues) spans 950–962 (LSPHRSDSVPDTK). Positions 950–976 (LSPHRSDSVPDTKKKGHKNNAPGSKPE) are disordered. The residue at position 1003 (Ser-1003) is a Phosphoserine. Residues 1063-1076 (LTKTNPILYYMLQK) form a ligand-dependent nuclear receptor binding region. Glycyl lysine isopeptide (Lys-Gly) (interchain with G-Cter in SUMO2) cross-links involve residues Lys-1108, Lys-1118, and Lys-1157. The tract at residues 1121–1161 (FFNLRSPYNSHMGNNASRPHSTNGEVYGLLGNALTIKKESE) is repression domain 4.

As to quaternary structure, interacts with CTBP1, CTBP2, ERS1, HDAC1, HDAC2, HDAC5, HDAC6, NR2C2, NR3C1, NR3C2, YWHAH, JUN and FOS. Found in a complex with both NR3C1 and YWHAH. Interacts with NR2C1 (sumoylated form and via the ligand-binding domain); the interaction results in promoting the repressor activity of NR2C1. Interacts with RARA and RXRB homodimers and RARA/RXRB heterodimers in the presence of ligand. Interacts with HDAC1 and HDAC3 via its N-terminal domain. Interacts with ZNF366. Interacts with RORA. Acetylation abolishes interaction with CTBP1. Phosphorylation enhances interaction with YWHAH. Acetylation regulates its nuclear translocation and corepressive activity. Expressed in the embryonic placenta. In the adult, expression is strong in the testis and brain. Also expressed at a high level in the white adipose tissue. Expressed constantly but at a weaker level in the adult heart, lung, stomach and kidney. Expressed moderately in the skeletal muscle. Expressed at a low level in the adult spleen, liver and brown adipose tissue. Expressed in the ovary at a high level in granulosa cells and at a lower level in the thecal and interstitial compartments.

The protein resides in the nucleus. In terms of biological role, modulates transcriptional repression by nuclear hormone receptors such as NR2C1, thyroid hormone receptor and retinoic acid receptor/RARA. Essential for cumulus expansion and follicle rupture during ovulation. Also controls the balance between fat accumulation and energy expenditure. Positive regulator of the circadian clock gene expression: stimulates transcription of BMAL1, CLOCK and CRY1 by acting as a coactivator for RORA and RORC. Involved in the regulation of ovarian function. Plays a role in renal development. In Mus musculus (Mouse), this protein is Nuclear receptor-interacting protein 1.